The sequence spans 388 residues: Succinate--CoA ligase [ADP-forming] subunit beta (388 aa).

Positions 9-244 constitute an ATP-grasp domain; sequence KQLFARYGLP…QSQEDPREAQ (236 aa). Residues Lys46, 53 to 55, Glu99, Thr102, and Glu107 contribute to the ATP site; that span reads GRG. Residues Asn199 and Asp213 each contribute to the Mg(2+) site. Substrate contacts are provided by residues Asn264 and 321–323; that span reads GIV.

The protein belongs to the succinate/malate CoA ligase beta subunit family. In terms of assembly, heterotetramer of two alpha and two beta subunits. Mg(2+) is required as a cofactor.

It carries out the reaction succinate + ATP + CoA = succinyl-CoA + ADP + phosphate. It catalyses the reaction GTP + succinate + CoA = succinyl-CoA + GDP + phosphate. Its pathway is carbohydrate metabolism; tricarboxylic acid cycle; succinate from succinyl-CoA (ligase route): step 1/1. In terms of biological role, succinyl-CoA synthetase functions in the citric acid cycle (TCA), coupling the hydrolysis of succinyl-CoA to the synthesis of either ATP or GTP and thus represents the only step of substrate-level phosphorylation in the TCA. The beta subunit provides nucleotide specificity of the enzyme and binds the substrate succinate, while the binding sites for coenzyme A and phosphate are found in the alpha subunit. In Salmonella dublin (strain CT_02021853), this protein is Succinate--CoA ligase [ADP-forming] subunit beta.